The primary structure comprises 513 residues: ATP synthase subunit alpha 1 (513 aa).

Residue 169–176 (GDRQTGKT) participates in ATP binding.

The protein belongs to the ATPase alpha/beta chains family. F-type ATPases have 2 components, CF(1) - the catalytic core - and CF(0) - the membrane proton channel. CF(1) has five subunits: alpha(3), beta(3), gamma(1), delta(1), epsilon(1). CF(0) has three main subunits: a(1), b(2) and c(9-12). The alpha and beta chains form an alternating ring which encloses part of the gamma chain. CF(1) is attached to CF(0) by a central stalk formed by the gamma and epsilon chains, while a peripheral stalk is formed by the delta and b chains.

The protein resides in the cell inner membrane. The enzyme catalyses ATP + H2O + 4 H(+)(in) = ADP + phosphate + 5 H(+)(out). Produces ATP from ADP in the presence of a proton gradient across the membrane. The alpha chain is a regulatory subunit. This Vibrio campbellii (strain ATCC BAA-1116) protein is ATP synthase subunit alpha 1.